Reading from the N-terminus, the 424-residue chain is Probable methyltransferase EP424R (424 aa).

Residues 103–315 (QIVTNAWLKM…TYIVGKNRLR (213 aa)) form the Adrift-type SAM-dependent 2'-O-MTase domain. S-adenosyl-L-methionine is bound by residues Gly-135 and Asp-228. Lys-268 acts as the Proton acceptor in catalysis.

Its subcellular location is the virion. The chain is Probable methyltransferase EP424R from Ornithodoros (relapsing fever ticks).